We begin with the raw amino-acid sequence, 122 residues long: Large ribosomal subunit protein uL14 (122 aa).

It belongs to the universal ribosomal protein uL14 family. In terms of assembly, part of the 50S ribosomal subunit. Forms a cluster with proteins L3 and L19. In the 70S ribosome, L14 and L19 interact and together make contacts with the 16S rRNA in bridges B5 and B8.

Functionally, binds to 23S rRNA. Forms part of two intersubunit bridges in the 70S ribosome. This is Large ribosomal subunit protein uL14 from Synechococcus sp. (strain JA-2-3B'a(2-13)) (Cyanobacteria bacterium Yellowstone B-Prime).